The chain runs to 528 residues: NAC domain-containing protein 13 (528 aa).

The 151-residue stretch at Leu-10–Lys-160 folds into the NAC domain. Residues Val-107–Lys-166 mediate DNA binding. The segment at Glu-388 to Ser-419 is disordered. Residues Phe-499–Met-519 form a helical membrane-spanning segment.

Interacts with RCD1. As to expression, expressed in roots, rosette leaves, shoot apex, stems and flowers.

It is found in the endoplasmic reticulum membrane. Its subcellular location is the nucleus. Its function is as follows. Transcriptional activator activated by proteolytic cleavage through regulated intramembrane proteolysis (RIP). Involved in oxidative stress tolerance by mediating regulation of mitochondrial retrograde signaling during mitochondrial dysfunction. Interacts directly with the mitochondrial dysfunction DNA consensus motif 5'-CTTGNNNNNCA[AC]G-3', a cis-regulatory elements of several mitochondrial retrograde regulation-induced genes, and triggers increased oxidative stress tolerance. This is NAC domain-containing protein 13 from Arabidopsis thaliana (Mouse-ear cress).